The primary structure comprises 249 residues: Eukaryotic translation initiation factor 3 subunit K (249 aa).

Positions 46–222 (FDCYANLALL…VKVPTNKENE (177 aa)) constitute a PCI domain.

It belongs to the eIF-3 subunit K family. As to quaternary structure, component of the eukaryotic translation initiation factor 3 (eIF-3) complex.

It localises to the cytoplasm. Functionally, component of the eukaryotic translation initiation factor 3 (eIF-3) complex, which is involved in protein synthesis of a specialized repertoire of mRNAs and, together with other initiation factors, stimulates binding of mRNA and methionyl-tRNAi to the 40S ribosome. The eIF-3 complex specifically targets and initiates translation of a subset of mRNAs involved in cell proliferation. This Aspergillus fumigatus (strain CBS 144.89 / FGSC A1163 / CEA10) (Neosartorya fumigata) protein is Eukaryotic translation initiation factor 3 subunit K.